The chain runs to 591 residues: Paxillin (591 aa).

Met-1 bears the N-acetylmethionine mark. The short motif at 3 to 15 (DLDALLADLESTT) is the LD motif 1 element. A disordered region spans residues 17 to 139 (HISKRPVFLS…SPTVMSSSLG (123 aa)). The residue at position 31 (Tyr-31) is a Phosphotyrosine; by PTK6. The span at 45-54 (VPPPVPPPPS) shows a compositional bias: pro residues. Ser-83 is subject to Phosphoserine. Tyr-88 is subject to Phosphotyrosine. Residues 89 to 99 (SSSAKNSSASN) are compositionally biased toward low complexity. At Ser-106 the chain carries Phosphoserine. The residue at position 118 (Tyr-118) is a Phosphotyrosine; by PTK6. Phosphoserine occurs at positions 119, 126, and 130. Residues 121–137 (PNKQKSAEPSPTVMSSS) show a composition bias toward polar residues. Thr-132 carries the post-translational modification Phosphothreonine. Phosphoserine is present on residues Ser-137, Ser-140, and Ser-143. Positions 144 to 156 (ELDRLLLELNAVQ) match the LD motif 2 motif. The tract at residues 156-261 (QHSPPGFPAD…QQQTRISASS (106 aa)) is disordered. Tyr-181 carries the post-translational modification Phosphotyrosine. An LD motif 3 motif is present at residues 216–228 (SVESLLDELESSV). At Ser-230 the chain carries Phosphoserine. A compositionally biased stretch (polar residues) spans 236–261 (TVNQGEMSSPQRVTSSQQQTRISASS). Ser-244 is subject to Phosphoserine; by CDK5. Residues Ser-250, Ser-258, Ser-261, Ser-272, Ser-303, Ser-322, Ser-332, and Ser-340 each carry the phosphoserine modification. Positions 262–315 (ATRELDELMASLSDFKMQGLEQRVDGERPWAAGWPPSSRQSSPEGQDEGGFMAQ) are required for binding to PARVA and ILK. The LD motif 4 signature appears at 265 to 276 (ELDELMASLSDF). Residues 289 to 338 (RPWAAGWPPSSRQSSPEGQDEGGFMAQGKTGSSSPPGGLSKPGSQLDSML) are disordered. Over residues 315–334 (QGKTGSSSPPGGLSKPGSQL) the composition is skewed to low complexity. The LD motif 5 signature appears at 333 to 345 (QLDSMLGSLQSDL). LIM zinc-binding domains follow at residues 356 to 415 (GVCG…LFSP), 416 to 473 (RCYY…DMFA), 474 to 533 (PKCG…RRGS), and 534 to 591 (LCSG…KLFC). Ser-533 carries the phosphoserine modification.

This sequence belongs to the paxillin family. Interacts in vitro with VCL/vinculin as well as to the SH3 domain of SRC and, when tyrosine phosphorylated, to the SH2 domain of CRK. Interacts with GIT1. Interacts with NUDT16L1/SDOS. Interacts with PTK2/FAK1. Interacts with PTK2B/PYK2. Interacts with ASAP2. Interacts with unphosphorylated ITGA4. Interacts with RNF5. Interacts with PDCD10. Interacts with NEK3, the interaction is prolactin-dependent. Interacts with PTK6. Interacts with TGFB1I1. Interacts with SORBS1. Interacts with PARVB. Interacts (via LD motif 4) with PARVA/PARVIN. Interacts (via LD motif 4) with ILK. Interacts (via cytoplasmic domain) with CEACAM1; the interaction is phosphotyrosyl-dependent. Interacts with LIMA1; this complex stabilizes actin dynamics. Interacts with CD36 (via C-terminus). Interacts with TRIM15. Interacts with PAK4; PAK4 acts as a scaffold to suppport PAXI phosphorylation at Ser-272. In terms of processing, phosphorylated by MAPK1/ERK2. Phosphorylated on tyrosine residues during integrin-mediated cell adhesion, embryonic development, fibroblast transformation and following stimulation of cells by mitogens. Phosphorylation at Ser-244 by CDK5 reduces its interaction with PTK2/FAK1 in matrix-cell focal adhesions (MCFA) during oligodendrocytes (OLs) differentiation. Phosphorylation at Tyr-31 and Tyr-118 by PTK6 promote the activation of RAC1 via CRK/CrKII, thereby promoting migration and invasion. Phosphorylation at Ser-250 by SLK is required for PXN redistribution and cell motility. Phosphorylation at Ser-272 promotes focal adhesion disassembly during cell migration.

Its subcellular location is the cytoplasm. The protein resides in the cytoskeleton. It localises to the cell junction. The protein localises to the focal adhesion. It is found in the cell cortex. Its function is as follows. Cytoskeletal protein involved in actin-membrane attachment at sites of cell adhesion to the extracellular matrix (focal adhesion). Recruits other proteins such as TRIM15 to focal adhesion. This Mus musculus (Mouse) protein is Paxillin.